The following is a 269-amino-acid chain: Surfeit locus protein 4 (269 aa).

The next 5 helical transmembrane spans lie at 64-84 (FLAT…CVLV), 92-112 (YACF…SILW), 179-199 (FFSI…AVGF), 203-223 (LAAL…NAFW), and 242-262 (TTSV…GVSM). The Di-lysine motif motif lies at 266-269 (KKEW).

This sequence belongs to the SURF4 family.

The protein resides in the endoplasmic reticulum membrane. It is found in the endoplasmic reticulum-Golgi intermediate compartment membrane. The protein localises to the golgi apparatus membrane. Functionally, endoplasmic reticulum cargo receptor that mediates the export of lipoproteins by recruiting cargos into COPII vesicles to facilitate their secretion. The chain is Surfeit locus protein 4 from Danio rerio (Zebrafish).